Consider the following 174-residue polypeptide: Nicotinamide-nucleotide adenylyltransferase (174 aa).

It belongs to the archaeal NMN adenylyltransferase family.

The protein resides in the cytoplasm. It catalyses the reaction beta-nicotinamide D-ribonucleotide + ATP + H(+) = diphosphate + NAD(+). Its pathway is cofactor biosynthesis; NAD(+) biosynthesis; NAD(+) from nicotinamide D-ribonucleotide: step 1/1. This chain is Nicotinamide-nucleotide adenylyltransferase, found in Methanospirillum hungatei JF-1 (strain ATCC 27890 / DSM 864 / NBRC 100397 / JF-1).